A 137-amino-acid polypeptide reads, in one-letter code: Basic phospholipase A2 homolog Pgo-K49 (137 aa).

Positions 1 to 16 (MRTLLIVAVLLVGVEG) are cleaved as a signal peptide. 7 disulfide bridges follow: Cys-42-Cys-131, Cys-44-Cys-60, Cys-59-Cys-111, Cys-65-Cys-137, Cys-66-Cys-104, Cys-73-Cys-97, and Cys-91-Cys-102. The interval 121-133 (KKYKIHMKFFCKK) is important for membrane-damaging activities in eukaryotes and bacteria; heparin-binding.

As to expression, expressed by the venom gland.

Its subcellular location is the secreted. Its function is as follows. Snake venom phospholipase A2 homolog that lacks enzymatic activity. Is myotoxic. A model of myotoxic mechanism has been proposed: an apo Lys49-PLA2 is activated by the entrance of a hydrophobic molecule (e.g. fatty acid) at the hydrophobic channel of the protein leading to a reorientation of a monomer. This reorientation causes a transition between 'inactive' to 'active' states, causing alignment of C-terminal and membrane-docking sites (MDoS) side-by-side and putting the membrane-disruption sites (MDiS) in the same plane, exposed to solvent and in a symmetric position for both monomers. The MDoS region stabilizes the toxin on membrane by the interaction of charged residues with phospholipid head groups. Subsequently, the MDiS region destabilizes the membrane with penetration of hydrophobic residues. This insertion causes a disorganization of the membrane, allowing an uncontrolled influx of ions (i.e. calcium and sodium), and eventually triggering irreversible intracellular alterations and cell death. The polypeptide is Basic phospholipase A2 homolog Pgo-K49 (Cerrophidion godmani (Porthidium godmani)).